Consider the following 436-residue polypeptide: Histidine--tRNA ligase (436 aa).

It belongs to the class-II aminoacyl-tRNA synthetase family.

It localises to the cytoplasm. The catalysed reaction is tRNA(His) + L-histidine + ATP = L-histidyl-tRNA(His) + AMP + diphosphate + H(+). In Thermococcus kodakarensis (strain ATCC BAA-918 / JCM 12380 / KOD1) (Pyrococcus kodakaraensis (strain KOD1)), this protein is Histidine--tRNA ligase.